The primary structure comprises 148 residues: uncharacterized protein (148 aa).

This is an uncharacterized protein from Acheta domesticus (House cricket).